The sequence spans 130 residues: Probable 4-amino-4-deoxy-L-arabinose-phosphoundecaprenol flippase subunit ArnF (130 aa).

Residues 1 to 4 lie on the Cytoplasmic side of the membrane; sequence MGYG. The helical transmembrane segment at 5–25 threads the bilayer; it reads WALFSVALVSAAQLLLKWVMM. At 26 to 44 the chain is on the periplasmic side; that stretch reads HLPPLGALRLWLDPAYAEP. A helical transmembrane segment spans residues 45–65; that stretch reads LALLMGGLLAYVCSMGCWFMA. The Cytoplasmic segment spans residues 66 to 74; that stretch reads LRRLPLNKA. A helical membrane pass occupies residues 75–95; that stretch reads YPLLSLSYVLVAACALMIPEF. Residues 96-103 lie on the Periplasmic side of the membrane; sequence NERFTFSR. Residues 104–124 traverse the membrane as a helical segment; that stretch reads LMGVALICGGLLLICLPAGGK. At 125-130 the chain is on the cytoplasmic side; that stretch reads GDTPRR.

This sequence belongs to the ArnF family. As to quaternary structure, heterodimer of ArnE and ArnF.

The protein localises to the cell inner membrane. Its pathway is bacterial outer membrane biogenesis; lipopolysaccharide biosynthesis. Functionally, translocates 4-amino-4-deoxy-L-arabinose-phosphoundecaprenol (alpha-L-Ara4N-phosphoundecaprenol) from the cytoplasmic to the periplasmic side of the inner membrane. The polypeptide is Probable 4-amino-4-deoxy-L-arabinose-phosphoundecaprenol flippase subunit ArnF (Sodalis glossinidius (strain morsitans)).